The sequence spans 265 residues: Mlc titration factor A (265 aa).

Zn(2+) contacts are provided by histidine 111, histidine 148, histidine 152, and glutamate 211.

It belongs to the MtfA family. Interacts with Mlc. It depends on Zn(2+) as a cofactor.

It is found in the cytoplasm. Its function is as follows. Involved in the modulation of the activity of the glucose-phosphotransferase system (glucose-PTS). Interacts with the transcriptional repressor Mlc, preventing its interaction with DNA and leading to the modulation of expression of genes regulated by Mlc, including ptsG, which encodes the PTS system glucose-specific EIICB component. Functionally, shows zinc-dependent metallopeptidase activity. The chain is Mlc titration factor A from Shigella dysenteriae serotype 1 (strain Sd197).